The following is a 476-amino-acid chain: Adenosylhomocysteinase (476 aa).

Thr67, Asp142, and Glu202 together coordinate substrate. Residue Thr203–Thr205 participates in NAD(+) binding. Substrate is bound by residues Lys232 and Asp236. Residues Asn237, Gly266–Gly271, Glu289, Asn324, Ile345–His347, and Asn390 contribute to the NAD(+) site.

This sequence belongs to the adenosylhomocysteinase family. The cofactor is NAD(+).

It localises to the cytoplasm. The catalysed reaction is S-adenosyl-L-homocysteine + H2O = L-homocysteine + adenosine. It participates in amino-acid biosynthesis; L-homocysteine biosynthesis; L-homocysteine from S-adenosyl-L-homocysteine: step 1/1. In terms of biological role, may play a key role in the regulation of the intracellular concentration of adenosylhomocysteine. In Synechococcus sp. (strain CC9311), this protein is Adenosylhomocysteinase.